Here is a 303-residue protein sequence, read N- to C-terminus: Olfactory receptor 4X2 (303 aa).

Residues 1 to 17 (MTEFIFLVLSPNQEVQR) are Extracellular-facing. The helical transmembrane segment at 18–41 (VCFVIFLFLYTAIVLGNFLIVLTV) threads the bilayer. At 42 to 49 (MTSRSLGS) the chain is on the cytoplasmic side. The chain crosses the membrane as a helical span at residues 50–71 (PMYFFLSYLSFMEICYSSATAP). Residues 72-92 (KLISDLLAERKVISWWGCMAQ) are Extracellular-facing. A disulfide bridge connects residues cysteine 89 and cysteine 181. Residues 93–112 (LFFLHFFGGTEIFLLTVMAY) form a helical membrane-spanning segment. Over 113 to 131 (DHYVAICKPLSYTTIMNWQ) the chain is Cytoplasmic. The helical transmembrane segment at 132–150 (VCTVLVGIAWVGGFMHSFA) threads the bilayer. Residues 151 to 187 (QILLIFHLLFCGPNVINHYFCDLVPLLKLACSDTFLI) are Extracellular-facing. A helical membrane pass occupies residues 188–211 (GLLIVANGGTLSVISFGVLLASYM). Residues 212-227 (VILLHLRTWSSEGWCK) are Cytoplasmic-facing. A helical transmembrane segment spans residues 228 to 250 (ALSTCGSHFAVVILFFGPCVFNS). Residues 251 to 261 (LRPSTTLPIDK) are Extracellular-facing. The helical transmembrane segment at 262 to 281 (MVAVFYTVITAILNPVIYSL) threads the bilayer. The Cytoplasmic segment spans residues 282-303 (RNAEMRKAMKRLWIRTLRLNEK).

The protein belongs to the G-protein coupled receptor 1 family.

The protein localises to the cell membrane. Functionally, odorant receptor. In Homo sapiens (Human), this protein is Olfactory receptor 4X2 (OR4X2).